Consider the following 235-residue polypeptide: NAD(P)H-hydrate epimerase (235 aa).

The YjeF N-terminal domain maps to 18–221 (AAKIDEQLFS…GLVEEHGLQM (204 aa)). Position 65–69 (65–69 (NNGGD)) interacts with (6S)-NADPHX. The K(+) site is built by Asn66 and Asp127. (6S)-NADPHX-binding positions include 131–137 (GFSFKPP) and Asp160. Residue Ser163 participates in K(+) binding.

The protein belongs to the NnrE/AIBP family. It depends on K(+) as a cofactor.

The catalysed reaction is (6R)-NADHX = (6S)-NADHX. It catalyses the reaction (6R)-NADPHX = (6S)-NADPHX. Its function is as follows. Catalyzes the epimerization of the S- and R-forms of NAD(P)HX, a damaged form of NAD(P)H that is a result of enzymatic or heat-dependent hydration. This is a prerequisite for the S-specific NAD(P)H-hydrate dehydratase to allow the repair of both epimers of NAD(P)HX. The protein is NAD(P)H-hydrate epimerase of Caenorhabditis briggsae.